Consider the following 88-residue polypeptide: Translation initiation factor IF-1 1 (88 aa).

The S1-like domain maps to 1 to 72; the sequence is MAKEELIELD…TKGRINFRHK (72 aa).

Belongs to the IF-1 family. In terms of assembly, component of the 30S ribosomal translation pre-initiation complex which assembles on the 30S ribosome in the order IF-2 and IF-3, IF-1 and N-formylmethionyl-tRNA(fMet); mRNA recruitment can occur at any time during PIC assembly.

The protein localises to the cytoplasm. One of the essential components for the initiation of protein synthesis. Stabilizes the binding of IF-2 and IF-3 on the 30S subunit to which N-formylmethionyl-tRNA(fMet) subsequently binds. Helps modulate mRNA selection, yielding the 30S pre-initiation complex (PIC). Upon addition of the 50S ribosomal subunit IF-1, IF-2 and IF-3 are released leaving the mature 70S translation initiation complex. The protein is Translation initiation factor IF-1 1 of Burkholderia mallei (strain ATCC 23344).